The chain runs to 222 residues: Zinc finger C2HC domain-containing protein 1B (222 aa).

The C2HC/C3H-type 1 zinc finger occupies 14–43; the sequence is ELFPCEVCGRRFAADVLERHGPICKKLFNR. 4 residues coordinate Zn(2+): cysteine 18, cysteine 21, histidine 33, and cysteine 37. The disordered stretch occupies residues 48–78; the sequence is FSSLKQRLQGTDIPTVKKTPQSKSPPVRKSN. The C2HC/C3H-type 2; degenerate zinc finger occupies 117–146; that stretch reads DYIQRPYCMRRFNESAAERHTNFCKDQSSR. The tract at residues 196-222 is disordered; the sequence is PTKSGLAMDPASGAKLRQGFSKSSKKD.

It belongs to the ZC2HC1 family. Zn(2+) serves as cofactor.

The polypeptide is Zinc finger C2HC domain-containing protein 1B (ZC2HC1B) (Homo sapiens (Human)).